Reading from the N-terminus, the 348-residue chain is Phenylalanine--tRNA ligase alpha subunit (348 aa).

Residue glutamate 259 participates in Mg(2+) binding.

This sequence belongs to the class-II aminoacyl-tRNA synthetase family. Phe-tRNA synthetase alpha subunit type 1 subfamily. As to quaternary structure, tetramer of two alpha and two beta subunits. Mg(2+) is required as a cofactor.

The protein localises to the cytoplasm. It carries out the reaction tRNA(Phe) + L-phenylalanine + ATP = L-phenylalanyl-tRNA(Phe) + AMP + diphosphate + H(+). This is Phenylalanine--tRNA ligase alpha subunit from Lacticaseibacillus paracasei (strain ATCC 334 / BCRC 17002 / CCUG 31169 / CIP 107868 / KCTC 3260 / NRRL B-441) (Lactobacillus paracasei).